The following is a 323-amino-acid chain: Beta-ketoacyl-[acyl-carrier-protein] synthase III (323 aa).

Residues cysteine 113 and histidine 250 contribute to the active site. The segment at 251–255 is ACP-binding; sequence QANKR. Asparagine 280 is a catalytic residue.

The protein belongs to the thiolase-like superfamily. FabH family. Homodimer.

It localises to the cytoplasm. The enzyme catalyses malonyl-[ACP] + acetyl-CoA + H(+) = 3-oxobutanoyl-[ACP] + CO2 + CoA. The protein operates within lipid metabolism; fatty acid biosynthesis. Functionally, catalyzes the condensation reaction of fatty acid synthesis by the addition to an acyl acceptor of two carbons from malonyl-ACP. Catalyzes the first condensation reaction which initiates fatty acid synthesis and may therefore play a role in governing the total rate of fatty acid production. Possesses both acetoacetyl-ACP synthase and acetyl transacylase activities. Its substrate specificity determines the biosynthesis of branched-chain and/or straight-chain of fatty acids. This Brucella anthropi (strain ATCC 49188 / DSM 6882 / CCUG 24695 / JCM 21032 / LMG 3331 / NBRC 15819 / NCTC 12168 / Alc 37) (Ochrobactrum anthropi) protein is Beta-ketoacyl-[acyl-carrier-protein] synthase III.